The chain runs to 80 residues: Peroxidase (80 aa).

Residues 56–80 are disordered; sequence DANEAEANSDLPGFNSSRSELEAAF. Position 67 (Pro-67) interacts with substrate. The N-linked (GlcNAc...) asparagine glycan is linked to Asn-70.

This sequence belongs to the peroxidase family. Classical plant (class III) peroxidase subfamily. Ca(2+) is required as a cofactor. The cofactor is heme b.

It carries out the reaction 2 a phenolic donor + H2O2 = 2 a phenolic radical donor + 2 H2O. Its function is as follows. Removal of H(2)O(2), oxidation of toxic reductants, biosynthesis and degradation of lignin, suberization, auxin catabolism, response to environmental stresses such as wounding, pathogen attack and oxidative stress. These functions might be dependent on each isozyme/isoform in each plant tissue. The polypeptide is Peroxidase (Triticum aestivum (Wheat)).